The primary structure comprises 743 residues: MAEVSGAALSQAGWYLSDEGVEACTSSPGKGSINDIILIALNTDLRTIGKKFLPSDINGGKVEKLEGPCVLQIQKVRNVAAPKDNEESQAAPRMLRVQMTDGHTSCTAVEFSYISKISLNTPPGTKVKLSGTVDIKNGFLLLSDSNTTVLGGEVEHLIDKWALQRSLLKHNRSNIGAEGGPPPFLPFGQKCASNVQVDSRELDRRKTLQVSLPAKPANDNDEFEKQRTAAIAEVAKSKETKTFGGGGGGARSNLNIGAAGHRNREVLQKEKASKSESKNEGVYRELVDEKALKHITEMGFSKEASRQALMDNANNLEAALNVLLNSSKQKPAVGPPARGRGKGRGRGRSEDEEDLGTARPSAPSTLFDFLESKMGTLNVEEPKSQPQHLHQGQHRGWNAEQNGMKDGTQSRHLPRNDTRQPRNERPPRFQKDTPTSKSTVENSVLSRNRGSERPSSSSGSDVWAEERIKCDRPYSRYDRTKDASHPLGLQHNDGAFKKRENSMQNRPGRGPLYAEAKENPLPPEFVDYNNQRRGRRENQTGHPDHCYERKPRTMNSEAVSGLKIEKHFSVNTDYPRPVQSNSLGVPNGETAPPLKGRRVGPIKSAGPVTAVPYDDKIFYNSGPKRRSGPIKPEKVIESSIPVEYAKVWKPGDECFALYWEDNKFYRAEVEALHSSGMTAVVKFTDYGNYEEVLLSNIKPVQTEAWEEEGTYDHTIEFRRGGDGQPRRSTRPTQQFYQPPRARN.

A disordered region spans residues 241–262; the sequence is KTFGGGGGGARSNLNIGAAGHR. One can recognise a UBA domain in the interval 286–326; the sequence is LVDEKALKHITEMGFSKEASRQALMDNANNLEAALNVLLNS. Disordered stretches follow at residues 327-365 and 380-549; these read SKQK…APST and EEPK…CYER. Ser349 is modified (phosphoserine). Residues 414 to 431 show a composition bias toward basic and acidic residues; sequence PRNDTRQPRNERPPRFQK. The segment covering 432-445 has biased composition (polar residues); sequence DTPTSKSTVENSVL. Ser438 is modified (phosphoserine). 2 stretches are compositionally biased toward basic and acidic residues: residues 464-484 and 536-549; these read AEER…KDAS and RENQ…CYER. Residue Lys563 forms a Glycyl lysine isopeptide (Lys-Gly) (interchain with G-Cter in SUMO2) linkage. The tract at residues 572 to 603 is disordered; that stretch reads TDYPRPVQSNSLGVPNGETAPPLKGRRVGPIK. In terms of domain architecture, Tudor spans 647–707; that stretch reads VWKPGDECFA…KPVQTEAWEE (61 aa). Over residues 711 to 725 the composition is skewed to basic and acidic residues; sequence YDHTIEFRRGGDGQP. Residues 711–743 form a disordered region; the sequence is YDHTIEFRRGGDGQPRRSTRPTQQFYQPPRARN. The tract at residues 723-743 is EBM motif; may mediate interaction with the EJC; sequence GQPRRSTRPTQQFYQPPRARN.

As to quaternary structure, component of mRNA stress granules. Interacts with FMR1, FXR1, FXR2, EWSR1, FUS, SERBP1, EEF1A1 and DDX3X or DDX3Y, and with the small nuclear ribonucleoprotein-associated proteins SNRPB and SNRPN. Interacts with 'Lys-48'-linked tetra-ubiquitin, but not with monoubiquitin or 'Lys-63'-linked ubiquitin chains. May interact with the exon junction complex (EJC) composed at least of CASC3, EIF4A3, MAGOH and RBM8A. Interacts with POLR2A (via the C-terminal domain (CTD)).

The protein localises to the cytoplasm. It localises to the nucleus. Scaffolding protein that specifically recognizes and binds dimethylarginine-containing proteins. Plays a role in the regulation of translation of target mRNAs by binding Arg/Gly-rich motifs (GAR) in dimethylarginine-containing proteins. In nucleus, acts as a coactivator: recognizes and binds asymmetric dimethylation on the core histone tails associated with transcriptional activation (H3R17me2a and H4R3me2a) and recruits proteins at these arginine-methylated loci. In cytoplasm, acts as an antiviral factor that participates in the assembly of stress granules together with G3BP1. This is Tudor domain-containing protein 3 (Tdrd3) from Mus musculus (Mouse).